We begin with the raw amino-acid sequence, 125 residues long: Calcitonin gene-related peptide 1 (125 aa).

Residues methionine 1–alanine 25 form the signal peptide. A propeptide spanning residues alanine 26 to glutamine 77 is cleaved from the precursor. Residues cysteine 81 and cysteine 86 are joined by a disulfide bond. Phenylalanine 116 carries the post-translational modification Phenylalanine amide. The propeptide occupies serine 122–isoleucine 125.

The protein belongs to the calcitonin family.

The protein resides in the secreted. Functionally, CGRP1/CALCA is a peptide hormone that induces vasodilation mediated by the CALCRL-RAMP1 receptor complex. Dilates a variety of vessels including the coronary, cerebral and systemic vasculature. Its abundance in the CNS also points toward a neurotransmitter or neuromodulator role. It also elevates platelet cAMP. CGRP1 can also bind and activate CALCR-RAMP1 (AMYR1) receptor complex. This chain is Calcitonin gene-related peptide 1 (CALCA), found in Gallus gallus (Chicken).